The primary structure comprises 343 residues: Polyprenal reductase 2 (343 aa).

6 helical membrane-spanning segments follow: residues 12–32 (GAWITVWIVSILPLVIASIPT), 66–86 (FAHFYVIGVVWTTLLLAATWM), 164–184 (MHILGYFAGLFFYVTAPLSLC), 223–243 (PLMKLGSLQWIGGAIFLWGWI), 266–286 (IIPYGDWFGMVSSPHFLAEIV), and 291–311 (LLIASGGTDITIWLLFGFVAA).

This sequence belongs to the steroid 5-alpha reductase family. Polyprenal reductase subfamily. As to expression, expressed in roots, leaves, stems and flowers.

The protein resides in the endoplasmic reticulum membrane. The catalysed reaction is a di-trans,poly-cis-dolichal + NADP(+) = a di-trans,poly-cis-polyprenal + NADPH + H(+). Its pathway is protein modification; protein glycosylation. Plays a key role in early steps of protein N-linked glycosylation by being involved in the conversion of polyprenol into dolichol. Acts as a polyprenal reductase that mediates the reduction of polyprenal into dolichal in a NADP-dependent mechanism. Dolichols are required for the synthesis of dolichol-linked monosaccharides and the oligosaccharide precursor used for N-glycosylation. Involved in the regulation of plant growth and reproductive processes. The chain is Polyprenal reductase 2 from Arabidopsis thaliana (Mouse-ear cress).